The chain runs to 87 residues: MLWLPDRGSCSARSPSGMLRGAPGGWRYGRRCGRRRQSCCCCCCCSHVGAPLSFHREASLVSHDGHDIMKQHCGEESIRGAHGYKNK.

In terms of assembly, interacts with PAF1 complex member PAF1. Interacts with transcription factor FOXM1. In terms of tissue distribution, expressed in brain, liver, kidney and stomach with lower levels in breast, intestine, thyroid and pancreas.

It is found in the nucleus. Enhances the binding of the PAF1 complex to target gene promoters and plays a role in negative regulation of transcription. May function as an anchor to keep the PAF1 complex on target gene promoters, sequentially pausing RNA polymerase II-induced mRNA elongation. Inhibits FOXM1-mediated transcription of PHB2. This is Transcriptional regulator PINT87aa from Homo sapiens (Human).